A 432-amino-acid polypeptide reads, in one-letter code: FMRFamide peptide receptor frpr-18 (432 aa).

Over 1–8 the chain is Extracellular; sequence MESQQLMA. A helical membrane pass occupies residues 9–29; that stretch reads CAILVIVLVGIFGNSLSFILF. Residues 30-42 lie on the Cytoplasmic side of the membrane; that stretch reads SRPHMRSSSVNVL. Residues 43–63 traverse the membrane as a helical segment; it reads LCALSFFDFSLLTLSIPIFVI. Residues 64–84 are Extracellular-facing; that stretch reads PNLDLWANDLSLSTYMAYILK. The chain crosses the membrane as a helical span at residues 85 to 105; that stretch reads LIYPINLMMQTCSVYIMVMIT. Topologically, residues 106 to 128 are cytoplasmic; it reads LERWVAVCRPLQVRVWCTPRKSR. The helical transmembrane segment at 129-149 threads the bilayer; the sequence is NAILVIIVSAFLYNFVRFFEY. Residues 150–176 lie on the Extracellular side of the membrane; sequence RFVVTESGALYEKWLRDPGKHRWYYVG. The helical transmembrane segment at 177-197 threads the bilayer; it reads YYTILYIVTHFLVPFSVMAFA. Over 198 to 225 the chain is Cytoplasmic; sequence NGHVIVAMCKLSKTRQMLTRQQQREQST. Residues 226–246 form a helical membrane-spanning segment; that stretch reads TVMLLIVTFVFAICNTLPFLL. Residues 247–271 are Extracellular-facing; the sequence is NVSESIFPTLFQDESTRGLAYWLND. A helical transmembrane segment spans residues 272-292; sequence LSNLLVVLNSGTTFIIYFTFS. The Cytoplasmic portion of the chain corresponds to 293–432; the sequence is EKYRQTLVFI…GEPDSPCQPC (140 aa). Disordered regions lie at residues 328–349 and 388–411; these read ISSE…SSRS and KLPS…GMPE.

The protein belongs to the G-protein coupled receptor 1 family. As to expression, expressed in a subset of neurons in the head, midbody, and tail, including AIY, ASI, BAG, URA, CAN, I6, PVQ, DVA, RIM, and VC, and in the anal sphincter and intestinal muscles. Expression from the ASI neurons is involved in promoting arousal.

The protein localises to the cell membrane. Its function is as follows. G-protein coupled receptor for flp-2 neuropeptides. May act through the G(q) alpha type of G proteins. Involved in mediating arousal from the sleep-like state called lethargus, which occurs during molting between larval and adult stages, in part by regulating touch sensitivity, and working in concert with neuropeptide pdf-1. In Caenorhabditis elegans, this protein is FMRFamide peptide receptor frpr-18.